Here is a 254-residue protein sequence, read N- to C-terminus: 4-hydroxy-tetrahydrodipicolinate reductase (254 aa).

Residue glycine 7 to isoleucine 12 participates in NAD(+) binding. Arginine 35 contacts NADP(+). NAD(+) contacts are provided by residues glycine 91–threonine 93 and alanine 115–methionine 118. The Proton donor/acceptor role is filled by histidine 147. (S)-2,3,4,5-tetrahydrodipicolinate is bound at residue histidine 148. Lysine 151 (proton donor) is an active-site residue. Residue glycine 157–threonine 158 participates in (S)-2,3,4,5-tetrahydrodipicolinate binding.

This sequence belongs to the DapB family.

The protein localises to the cytoplasm. It carries out the reaction (S)-2,3,4,5-tetrahydrodipicolinate + NAD(+) + H2O = (2S,4S)-4-hydroxy-2,3,4,5-tetrahydrodipicolinate + NADH + H(+). The catalysed reaction is (S)-2,3,4,5-tetrahydrodipicolinate + NADP(+) + H2O = (2S,4S)-4-hydroxy-2,3,4,5-tetrahydrodipicolinate + NADPH + H(+). It participates in amino-acid biosynthesis; L-lysine biosynthesis via DAP pathway; (S)-tetrahydrodipicolinate from L-aspartate: step 4/4. Functionally, catalyzes the conversion of 4-hydroxy-tetrahydrodipicolinate (HTPA) to tetrahydrodipicolinate. This chain is 4-hydroxy-tetrahydrodipicolinate reductase, found in Helicobacter pylori (strain P12).